A 503-amino-acid polypeptide reads, in one-letter code: D-alanine--D-alanyl carrier protein ligase (503 aa).

151 to 152 (TS) is an ATP binding site. Residue Asp196 coordinates D-alanine. Residue 291–296 (NTYGPT) coordinates ATP. Residue Val300 coordinates D-alanine. ATP-binding positions include Asp382, 393-396 (YNGR), and Lys491. A D-alanine-binding site is contributed by Lys491.

This sequence belongs to the ATP-dependent AMP-binding enzyme family. DltA subfamily.

The protein resides in the cytoplasm. It carries out the reaction holo-[D-alanyl-carrier protein] + D-alanine + ATP = D-alanyl-[D-alanyl-carrier protein] + AMP + diphosphate. Its pathway is cell wall biogenesis; lipoteichoic acid biosynthesis. In terms of biological role, catalyzes the first step in the D-alanylation of lipoteichoic acid (LTA), the activation of D-alanine and its transfer onto the D-alanyl carrier protein (Dcp) DltC. In an ATP-dependent two-step reaction, forms a high energy D-alanyl-AMP intermediate, followed by transfer of the D-alanyl residue as a thiol ester to the phosphopantheinyl prosthetic group of the Dcp. D-alanylation of LTA plays an important role in modulating the properties of the cell wall in Gram-positive bacteria, influencing the net charge of the cell wall. This chain is D-alanine--D-alanyl carrier protein ligase, found in Bacillus anthracis (strain A0248).